Here is a 163-residue protein sequence, read N- to C-terminus: IQSTSMDQGILTEDSMNSFIRTLIQAGIWKNKVPKQTARTKDGMQTTVKKTEAEADAMASKGTRLGFQPVVSVDAELLRQQRRFSSPRVLLSENAPLQPPPLYLTEEPTVLNRTSRRKREGKSHRGEYSVCDSESRWVTDKSSAVDIRGHQVSVLGEIRMGPS.

Positions 1 to 3 are cleaved as a signal peptide; sequence IQS. A propeptide spanning residues 4-119 is cleaved from the precursor; the sequence is TSMDQGILTE…VLNRTSRRKR (116 aa). An N-linked (GlcNAc...) asparagine glycan is attached at asparagine 112. Residues 112-132 are disordered; that stretch reads NRTSRRKREGKSHRGEYSVCD. The segment covering 123–132 has biased composition (basic and acidic residues); that stretch reads SHRGEYSVCD.

Belongs to the NGF-beta family.

The protein resides in the secreted. Seems to promote the survival of visceral and proprioceptive sensory neurons. In Exiliboa placata (Oaxacan dwarf boa), this protein is Neurotrophin-3 (NTF3).